The primary structure comprises 509 residues: Maturase K (509 aa).

This sequence belongs to the intron maturase 2 family. MatK subfamily.

The protein localises to the plastid. The protein resides in the chloroplast. Usually encoded in the trnK tRNA gene intron. Probably assists in splicing its own and other chloroplast group II introns. The polypeptide is Maturase K (Anthocercis angustifolia (Narrow-leaf ray-flower)).